The following is a 153-amino-acid chain: Small ribosomal subunit protein bS16 (153 aa).

Residues 121–131 (AEAAAKAKAEA) show a composition bias toward basic and acidic residues. Residues 121 to 153 (AEAAAKAKAEAEAAAAAEEAPAEEAAEEAPAED) form a disordered region. The span at 140 to 153 (APAEEAAEEAPAED) shows a compositional bias: acidic residues.

Belongs to the bacterial ribosomal protein bS16 family.

The sequence is that of Small ribosomal subunit protein bS16 from Bifidobacterium longum (strain DJO10A).